We begin with the raw amino-acid sequence, 1278 residues long: NPC intracellular cholesterol transporter 1 (1278 aa).

The first 22 residues, 1–22, serve as a signal peptide directing secretion; sequence MTARGLALGLLLLLLCPAQVFS. The Lumenal segment spans residues 23–261; sequence QSCVWYGECG…QPPPPPAPWT (239 aa). Disulfide bonds link C25/C74, C31/C42, C63/C109, C75/C113, C97/C238, C100/C160, C177/C184, C227/C243, and C240/C247. Cholesterol is bound at residue N41. N-linked (GlcNAc...) asparagine glycosylation occurs at N70. Residue Q79 coordinates cholesterol. Residues N122 and N135 are each glycosylated (N-linked (GlcNAc...) asparagine). The N-linked (GlcNAc...) asparagine; atypical glycan is linked to N158. The important for cholesterol binding and cholesterol transfer from NPC1 to liposomes stretch occupies residues 175 to 205; sequence LLCGKDADACNATNWIEYMFNKDNGQAPFTI. 2 N-linked (GlcNAc...) asparagine glycosylation sites follow: N185 and N222. The helical transmembrane segment at 262-282 threads the bilayer; that stretch reads ILGLDAMYVIMWITYMAFLLV. The Cytoplasmic segment spans residues 283-350; sequence FFGAFFAVWC…RWGSFCVRNP (68 aa). A helical membrane pass occupies residues 351-371; the sequence is GCVIFFSLVFITACSSGLVFV. The Lumenal segment spans residues 372–620; the sequence is RVTTNPVDLW…DELNRESDSD (249 aa). N-linked (GlcNAc...) asparagine glycosylation is found at N452, N459, N478, N524, N557, N572, and N598. 2 disulfides stabilise this stretch: C468–C479 and C516–C533. In terms of domain architecture, SSD spans 620 to 785; the sequence is DVFTVVISYA…ITCFVSLLGL (166 aa). The helical transmembrane segment at 621–641 threads the bilayer; sequence VFTVVISYAIMFLYISLALGH. Residues 642–653 are Cytoplasmic-facing; sequence MKSCRRLLVDSK. The chain crosses the membrane as a helical span at residues 654–675; sequence VSLGIAGILIVLSSVACSLGVF. Residues 676-685 lie on the Lumenal side of the membrane; the sequence is SYIGLPLTLI. A helical membrane pass occupies residues 686 to 706; that stretch reads VIEVIPFLVLAVGVDNIFILV. The Cytoplasmic segment spans residues 707–730; that stretch reads QAYQRDERLQGETLDQQLGRVLGE. Residues 731-751 form a helical membrane-spanning segment; that stretch reads VAPSMFLSSFSETVAFFLGAL. The Lumenal portion of the chain corresponds to 752 to 759; it reads SVMPAVHT. Residues 760-783 traverse the membrane as a helical segment; it reads FSLFAGLAVFIDFLLQITCFVSLL. Over 784-832 the chain is Cytoplasmic; that stretch reads GLDIKRQEKNRLDIFCCVRGAEDGTSVQASESCLFRFFKNSYSPLLLKD. Residues 833–853 form a helical membrane-spanning segment; that stretch reads WMRPIVIAIFVGVLSFSIAVL. The Lumenal segment spans residues 854 to 1097; that stretch reads NKVDIGLDQS…YEQYLTIIDD (244 aa). Residues C909 and C914 are joined by a disulfide bond. 6 N-linked (GlcNAc...) asparagine glycosylation sites follow: N916, N931, N961, N968, N1064, and N1072. Disulfide bonds link C956/C1011, C957/C979, and C967/C976. A helical transmembrane segment spans residues 1098-1118; that stretch reads TIFNLGVSLGAIFLVTMVLLG. Topologically, residues 1119–1124 are cytoplasmic; it reads CELWSA. Residues 1125-1145 traverse the membrane as a helical segment; the sequence is VIMCATIAMVLVNMFGVMWLW. The Lumenal portion of the chain corresponds to 1146–1150; it reads GISLN. A helical transmembrane segment spans residues 1151 to 1171; that stretch reads AVSLVNLVMSCGISVEFCSHI. Over 1172 to 1194 the chain is Cytoplasmic; the sequence is TRAFTVSMKGSRVERAEEALAHM. Residues 1195–1215 traverse the membrane as a helical segment; the sequence is GSSVFSGITLTKFGGIVVLAF. Topologically, residues 1216–1223 are lumenal; that stretch reads AKSQIFQI. The helical transmembrane segment at 1224 to 1244 threads the bilayer; sequence FYFRMYLAMVLLGATHGLIFL. The Cytoplasmic segment spans residues 1245–1278; it reads PVLLSYIGPSVNKAKSCATEERYKGTERERLLNF. A required for location in lysosomes region spans residues 1275–1278; sequence LLNF. Residues 1275 to 1278 carry the Di-leucine motif motif; it reads LLNF.

Belongs to the patched family. In terms of assembly, interacts (via the second lumenal domain) with NPC2. Interacts with TMEM97; the interaction may decrease NPC1 availability to the cell. Interacts with TIM1. Interacts with SLC38A9; this interaction inhibits cholesterol-mediated mTORC1 activation via its sterol transport activity. (Microbial infection) Interacts with ebolavirus glycoprotein. Post-translationally, N-glycosylated.

The protein resides in the late endosome membrane. Its subcellular location is the lysosome membrane. The enzyme catalyses cholesterol(in) = cholesterol(out). In terms of biological role, intracellular cholesterol transporter which acts in concert with NPC2 and plays an important role in the egress of cholesterol from the endosomal/lysosomal compartment. Unesterified cholesterol that has been released from LDLs in the lumen of the late endosomes/lysosomes is transferred by NPC2 to the cholesterol-binding pocket in the N-terminal domain of NPC1. Cholesterol binds to NPC1 with the hydroxyl group buried in the binding pocket. Binds oxysterol with higher affinity than cholesterol. May play a role in vesicular trafficking in glia, a process that may be crucial for maintaining the structural and functional integrity of nerve terminals. Inhibits cholesterol-mediated mTORC1 activation throught its interaction with SLC38A9. Its function is as follows. (Microbial infection) Acts as an endosomal entry receptor for ebolavirus. This chain is NPC intracellular cholesterol transporter 1, found in Homo sapiens (Human).